Consider the following 145-residue polypeptide: Large ribosomal subunit protein uL15 (145 aa).

Positions 1–52 (MKLNTIAPAEGSKKDRRRVGRGIGSGFGKTAGRGHKGQHARSGGYHKVGFEG) are disordered. The span at 21–31 (RGIGSGFGKTA) shows a compositional bias: gly residues.

It belongs to the universal ribosomal protein uL15 family. As to quaternary structure, part of the 50S ribosomal subunit.

Binds to the 23S rRNA. This Acidithiobacillus ferrooxidans (strain ATCC 53993 / BNL-5-31) (Leptospirillum ferrooxidans (ATCC 53993)) protein is Large ribosomal subunit protein uL15.